The sequence spans 34 residues: MSDIN-like toxin proprotein 4 (34 aa).

The propeptide occupies 1 to 10 (MSDINATRLP). A cross-link (cyclopeptide (Val-Pro)) is located at residues 11 to 17 (VWIGYSP). A propeptide spanning residues 18-34 (CVGDDCIALLTRGEGLC) is cleaved from the precursor.

The protein belongs to the MSDIN fungal toxin family. Processed by the macrocyclase-peptidase enzyme POPB to yield a toxic cyclic heptapeptide. POPB first removes 10 residues from the N-terminus. Conformational trapping of the remaining peptide forces the enzyme to release this intermediate rather than proceed to macrocyclization. The enzyme rebinds the remaining peptide in a different conformation and catalyzes macrocyclization of the N-terminal 7 residues. Expressed in basidiocarps.

Probable toxin that belongs to the MSDIN-like toxin family responsible for a large number of food poisoning cases and deaths. This chain is MSDIN-like toxin proprotein 4, found in Amanita exitialis (Guangzhou destroying angel).